A 315-amino-acid polypeptide reads, in one-letter code: Lipoyl synthase (315 aa).

Positions methionine 1–proline 33 are disordered. The span at arginine 9–arginine 29 shows a compositional bias: basic and acidic residues. [4Fe-4S] cluster is bound by residues cysteine 54, cysteine 59, cysteine 65, cysteine 80, cysteine 84, cysteine 87, and serine 294. The region spanning tryptophan 66–leucine 283 is the Radical SAM core domain.

This sequence belongs to the radical SAM superfamily. Lipoyl synthase family. Requires [4Fe-4S] cluster as cofactor.

It is found in the cytoplasm. It carries out the reaction [[Fe-S] cluster scaffold protein carrying a second [4Fe-4S](2+) cluster] + N(6)-octanoyl-L-lysyl-[protein] + 2 oxidized [2Fe-2S]-[ferredoxin] + 2 S-adenosyl-L-methionine + 4 H(+) = [[Fe-S] cluster scaffold protein] + N(6)-[(R)-dihydrolipoyl]-L-lysyl-[protein] + 4 Fe(3+) + 2 hydrogen sulfide + 2 5'-deoxyadenosine + 2 L-methionine + 2 reduced [2Fe-2S]-[ferredoxin]. The protein operates within protein modification; protein lipoylation via endogenous pathway; protein N(6)-(lipoyl)lysine from octanoyl-[acyl-carrier-protein]: step 2/2. In terms of biological role, catalyzes the radical-mediated insertion of two sulfur atoms into the C-6 and C-8 positions of the octanoyl moiety bound to the lipoyl domains of lipoate-dependent enzymes, thereby converting the octanoylated domains into lipoylated derivatives. The sequence is that of Lipoyl synthase from Paracoccus denitrificans (strain Pd 1222).